We begin with the raw amino-acid sequence, 111 residues long: Beta-defensin 126 (111 aa).

Residues 1–20 form the signal peptide; the sequence is MKSLLFTLAVFMLLAQLVSG. The interval 21–63 is in vitro binds to LPS, mediates antimicrobial activity and inhibits LPS-mediated inflammation; it reads NWYVKKCLNDVGICKKKCKPEEMHVKNGWAMCGKQRDCCVPAD. Intrachain disulfides connect Cys-27–Cys-58, Cys-34–Cys-52, and Cys-38–Cys-59.

Belongs to the beta-defensin family. Homodimer or homooligomer; disulfide-linked. Post-translationally, O-glycosylated; glycans contain alpha(2,3)-linked sialic acids.

Its subcellular location is the secreted. Its function is as follows. Highly glycosylated atypical beta-defensin involved in several aspects of sperm function. Facilitates sperm transport in the female reproductive tract and contributes to sperm protection against immunodetection; both functions are probably implicating the negative surface charge provided by its O-linked oligosaccharides in the sperm glycocalyx. Involved in binding of sperm to oviductal epithelial cells to form a sperm reservoir until ovulation. Release from the sperm surface during capacitation and ovaluation by an elevation of oviductal fluid pH is unmasking other surface components and allows sperm to penetrate the cumulus matrix and bind to the zona pellucida of the oocyte. In vitro has antimicrobial activity and may inhibit LPS-mediated inflammation. The polypeptide is Beta-defensin 126 (DEFB126) (Gorilla gorilla gorilla (Western lowland gorilla)).